The following is a 135-amino-acid chain: MALRNKAFHQLRQLFQQHTARWQHELPDLTKPQYAVMRAIADKPGIEQVALIEAAVSTKATLAEMLARMENRGLVRREHDPADKRRRFVWLTAEGEKILAAAIPIGDSVDEEFLGRLSGEEQELFMQLVRKMMNA.

One can recognise an HTH marR-type domain in the interval 4–134; the sequence is RNKAFHQLRQ…FMQLVRKMMN (131 aa). Residues 48-71 constitute a DNA-binding region (H-T-H motif); it reads QVALIEAAVSTKATLAEMLARMEN.

Involved in the temperature-dependent positive control of flagellum-driven swimming motility and cellular aggregation. Regulates fliC expression by directly interacting with fliC promoter. The sequence is that of Transcriptional regulator HosA (hosA) from Escherichia coli O111:H-.